The sequence spans 264 residues: NADH dehydrogenase [ubiquinone] iron-sulfur protein 3, mitochondrial (264 aa).

The N-terminal 36 residues, 1–36, are a transit peptide targeting the mitochondrion; sequence MAAAAVARLWWRGILGASALTRGTGRPSVLLLPVRR.

It belongs to the complex I 30 kDa subunit family. As to quaternary structure, core subunit of respiratory chain NADH dehydrogenase (Complex I) which is composed of 45 different subunits. Interacts with NDUFAF3. Interacts with RAB5IF. Found in subcomplexes containing subunits NDUFS2, MT-ND1 and NDUFA13.

It is found in the mitochondrion inner membrane. The enzyme catalyses a ubiquinone + NADH + 5 H(+)(in) = a ubiquinol + NAD(+) + 4 H(+)(out). Core subunit of the mitochondrial membrane respiratory chain NADH dehydrogenase (Complex I) which catalyzes electron transfer from NADH through the respiratory chain, using ubiquinone as an electron acceptor. Essential for the catalytic activity and assembly of complex I. The chain is NADH dehydrogenase [ubiquinone] iron-sulfur protein 3, mitochondrial (NDUFS3) from Homo sapiens (Human).